Reading from the N-terminus, the 433-residue chain is Divergent protein kinase domain 2B (433 aa).

The first 29 residues, 1–29, serve as a signal peptide directing secretion; sequence MEPRLGPKAAALHLGWPFLLLWVSGLSYS. Residue Asn-100 is glycosylated (N-linked (GlcNAc...) asparagine).

Belongs to the DIPK family.

It is found in the secreted. The chain is Divergent protein kinase domain 2B (DIPK2B) from Bos taurus (Bovine).